Reading from the N-terminus, the 431-residue chain is Serine--tRNA ligase (431 aa).

237–239 (TAE) is a binding site for L-serine. 268-270 (RSE) contributes to the ATP binding site. E291 is an L-serine binding site. 355-358 (EISS) is an ATP binding site. S390 lines the L-serine pocket.

This sequence belongs to the class-II aminoacyl-tRNA synthetase family. Type-1 seryl-tRNA synthetase subfamily. As to quaternary structure, homodimer. The tRNA molecule binds across the dimer.

The protein resides in the cytoplasm. It catalyses the reaction tRNA(Ser) + L-serine + ATP = L-seryl-tRNA(Ser) + AMP + diphosphate + H(+). The catalysed reaction is tRNA(Sec) + L-serine + ATP = L-seryl-tRNA(Sec) + AMP + diphosphate + H(+). It functions in the pathway aminoacyl-tRNA biosynthesis; selenocysteinyl-tRNA(Sec) biosynthesis; L-seryl-tRNA(Sec) from L-serine and tRNA(Sec): step 1/1. Functionally, catalyzes the attachment of serine to tRNA(Ser). Is also able to aminoacylate tRNA(Sec) with serine, to form the misacylated tRNA L-seryl-tRNA(Sec), which will be further converted into selenocysteinyl-tRNA(Sec). The polypeptide is Serine--tRNA ligase (Neisseria gonorrhoeae (strain NCCP11945)).